The following is a 292-amino-acid chain: Homoserine kinase (292 aa).

Residue proline 84–alanine 94 participates in ATP binding.

This sequence belongs to the GHMP kinase family. Homoserine kinase subfamily.

The protein resides in the cytoplasm. It carries out the reaction L-homoserine + ATP = O-phospho-L-homoserine + ADP + H(+). It participates in amino-acid biosynthesis; L-threonine biosynthesis; L-threonine from L-aspartate: step 4/5. Functionally, catalyzes the ATP-dependent phosphorylation of L-homoserine to L-homoserine phosphate. This is Homoserine kinase from Campylobacter lari (strain RM2100 / D67 / ATCC BAA-1060).